Reading from the N-terminus, the 298-residue chain is Transcription factor BOA (298 aa).

3 disordered regions span residues 1-26, 79-143, and 206-232; these read MGKE…EYRI, LRSS…KRPR, and EDPY…GGGS. Over residues 10 to 20 the composition is skewed to acidic residues; that stretch reads YGDDDGEDAGG. A compositionally biased stretch (basic and acidic residues) spans 104 to 113; the sequence is DPKKQKKSDG. Over residues 122-131 the composition is skewed to acidic residues; that stretch reads STAEEGDSGP. Residues 138–197 constitute a DNA-binding region (myb-like GARP); the sequence is TSKRPRLVWTPQLHKRFVDVVAHLGIKNAVPKTIMQLMNVEGLTRENVASHLQKYRLYLK. Residues 209–227 are compositionally biased toward polar residues; the sequence is YSSSDQLFSSTPVPPQSFQ.

Its subcellular location is the nucleus. Transcription factor that is a critical component of the regulatory circuit of the circadian clock. Binds to specific sites on CCA1 promoter leading to CCA1 activation. Is required for the rhythmic expression of other clock genes such as LHY, GI and APRR1/TOC1. This chain is Transcription factor BOA (BOA), found in Arabidopsis thaliana (Mouse-ear cress).